A 164-amino-acid polypeptide reads, in one-letter code: CASP-like protein 1C1 (164 aa).

The Cytoplasmic portion of the chain corresponds to 1-7 (MVKLTKR). The helical transmembrane segment at 8 to 28 (IGGLVLRLAAFGAALAALIVM) threads the bilayer. The Extracellular portion of the chain corresponds to 29–51 (ITSRERASFLAISLEAKYTDMAA). Residues 52 to 72 (FKYFVIANAVVSVYSFLVLFL) form a helical membrane-spanning segment. At 73-80 (PKESLLWK) the chain is on the cytoplasmic side. A helical transmembrane segment spans residues 81–101 (FVVVLDLVMTMLLTSSLSAAL). Residues 102 to 129 (AVAQVGKKGNANAGWLPICGQVPKFCDQ) are Extracellular-facing. The chain crosses the membrane as a helical span at residues 130–150 (ITGALIAGFVALVLYVLLLLY). Residues 151–164 (SLHAVVDPFLLQKS) are Cytoplasmic-facing.

Belongs to the Casparian strip membrane proteins (CASP) family. Homodimer and heterodimers. In terms of tissue distribution, expressed in the stele of the root.

It localises to the cell membrane. In Arabidopsis thaliana (Mouse-ear cress), this protein is CASP-like protein 1C1.